The sequence spans 187 residues: uncharacterized protein (187 aa).

The N-myristoyl glycine; by host moiety is linked to residue G2.

It belongs to the mimivirus L332/L333/L334 family.

This is an uncharacterized protein from Acanthamoeba polyphaga (Amoeba).